Here is a 164-residue protein sequence, read N- to C-terminus: Phosphopantetheine adenylyltransferase (164 aa).

Substrate is bound at residue serine 9. Residues 9–10 (SF) and histidine 17 each bind ATP. Substrate is bound by residues lysine 41, valine 78, and arginine 92. ATP is bound by residues 93-95 (GLR), glutamate 103, and 128-134 (SRPITAT).

It belongs to the bacterial CoaD family. As to quaternary structure, homohexamer. Mg(2+) is required as a cofactor.

It localises to the cytoplasm. It catalyses the reaction (R)-4'-phosphopantetheine + ATP + H(+) = 3'-dephospho-CoA + diphosphate. The protein operates within cofactor biosynthesis; coenzyme A biosynthesis; CoA from (R)-pantothenate: step 4/5. Reversibly transfers an adenylyl group from ATP to 4'-phosphopantetheine, yielding dephospho-CoA (dPCoA) and pyrophosphate. This Agrobacterium fabrum (strain C58 / ATCC 33970) (Agrobacterium tumefaciens (strain C58)) protein is Phosphopantetheine adenylyltransferase.